Here is a 359-residue protein sequence, read N- to C-terminus: Prostaglandin F2-alpha receptor (359 aa).

The Extracellular portion of the chain corresponds to 1–31 (MSMNNSKQLVSPAAALLSNTTCQTENRLSVF). N-linked (GlcNAc...) asparagine glycosylation is found at asparagine 4 and asparagine 19. A helical transmembrane segment spans residues 32-54 (FSVIFMTVGILSNSLAIAILMKA). Residues 55 to 69 (YQRFRQKSKASFLLL) lie on the Cytoplasmic side of the membrane. Residues 70–90 (ASGLVITDFFGHLINGAIAVF) traverse the membrane as a helical segment. At 91-109 (VYASDKEWIRFDQSNVLCS) the chain is on the extracellular side. Cysteine 108 and cysteine 186 are oxidised to a cystine. The chain crosses the membrane as a helical span at residues 110–131 (IFGICMVFSGLCPLLLGSVMAI). The Cytoplasmic segment spans residues 132–152 (ERCIGVTKPIFHSTKITSKHV). Residues 153 to 175 (KMMLSGVCLFAVFIALLPILGHR) form a helical membrane-spanning segment. The Extracellular portion of the chain corresponds to 176–198 (DYKIQASRTWCFYNTEDIKDWED). The chain crosses the membrane as a helical span at residues 199 to 224 (RFYLLLFSFLGLLALGVSLLCNAITG). Residues 225-250 (ITLLRVKFKSQQHRQGRSHHLEMVIQ) are Cytoplasmic-facing. A helical transmembrane segment spans residues 251 to 267 (LLAIMCVSCICWSPFLV). Residues 268-285 (TMANIGINGNHSLETCET) are Extracellular-facing. The helical transmembrane segment at 286 to 307 (TLFALRMATWNQILDPWVYILL) threads the bilayer. Residues 308 to 359 (RKAVLKNLYKLASQCCGVHVISLHIWELSSIKNSLKVAAISESPVAEKSAST) lie on the Cytoplasmic side of the membrane.

Belongs to the G-protein coupled receptor 1 family. In terms of assembly, isoform 1 can form heterodimers with isoform 5 (and probably other isoforms). In terms of tissue distribution, eye.

The protein localises to the cell membrane. Its function is as follows. Receptor for prostaglandin F2-alpha (PGF2-alpha). The activity of this receptor is mediated by G proteins which activate a phosphatidylinositol-calcium second messenger system. Initiates luteolysis in the corpus luteum. Isoforms 2 to 7 do not bind PGF2-alpha but are proposed to modulate signaling by participating in variant receptor complexes; heterodimers between isoform 1 and isoform 5 are proposed to be a receptor for prostamides including the synthetic analog bimatoprost. The protein is Prostaglandin F2-alpha receptor (PTGFR) of Homo sapiens (Human).